Here is a 476-residue protein sequence, read N- to C-terminus: Cysteine--tRNA ligase (476 aa).

A Zn(2+)-binding site is contributed by C31. The 'HIGH' region motif lies at 33-43; sequence PTVYNYAHIGN. C211, H236, and E240 together coordinate Zn(2+). A 'KMSKS' region motif is present at residues 269-273; sequence KMSKS. An ATP-binding site is contributed by K272.

This sequence belongs to the class-I aminoacyl-tRNA synthetase family. In terms of assembly, monomer. Requires Zn(2+) as cofactor.

The protein resides in the cytoplasm. The catalysed reaction is tRNA(Cys) + L-cysteine + ATP = L-cysteinyl-tRNA(Cys) + AMP + diphosphate. The sequence is that of Cysteine--tRNA ligase from Xanthomonas axonopodis pv. citri (strain 306).